Consider the following 614-residue polypeptide: MLRHSLRSASKLQSKNVRLLRAAPLLLKRSLSNDPKEVFTKLTDENDPQRDAFFKYGWGSWLKNDKQEKEKRVTRFSIEGLNKVLSDLHEQSAQADKTAKTDAVPPPSYNPNLTVSLPHNVTSKHLGTPKRGESVRVVSMASFHEGKHHRIYKIDTNAGKSFVLRIPYGIDEENTLAYRVKSEVATMDFADLKLGMNVPKVFCFGVNALNPIRQPFILEEYVPGRLLMKDWMPLASDSADGSHKEKLNSVIQPISEFQAKLAETEFTAFGSLYFAKDYRESNEPAYKSDTDGDLADRWRIGPSVERCFWRKKSALPFEQRKQYLGPWTISQPLDIVKSLGSLEAENARARLAIKQADASPEAEIDEQVLRDQITAFENLAKLAPVMYNLKTKSIPNMDAIVKPRLCHPDLDPMNVILHEENGKPYLLDFEGTTVKPFILHNNPQFVAYDGPKIYDLERDVENYSKLNAQEKDQYEFMYKRTRNQYLWESQLNQNAKHLISSIAPLVKLLRSPYVYAVQRKYDQEYLLIDEALVQLKEVWELFAKNELTNSEQFPVEFTEEWLRQHAEKLNAYHEKLIAEPFSATQGWMPQDLFDNLVKSGVLVKDANGDHSLKQ.

The N-terminal 38 residues, 1–38 (MLRHSLRSASKLQSKNVRLLRAAPLLLKRSLSNDPKEV), are a transit peptide targeting the mitochondrion. A disordered region spans residues 90 to 129 (EQSAQADKTAKTDAVPPPSYNPNLTVSLPHNVTSKHLGTP). Positions 110–125 (NPNLTVSLPHNVTSKH) are enriched in polar residues.

It belongs to the AIM9 family.

It is found in the mitochondrion. The chain is Altered inheritance of mitochondria protein 9, mitochondrial (AIM9) from Eremothecium gossypii (strain ATCC 10895 / CBS 109.51 / FGSC 9923 / NRRL Y-1056) (Yeast).